We begin with the raw amino-acid sequence, 117 residues long: Gamma-aminobutyric acid receptor-associated protein (117 aa).

The interaction with beta-tubulin stretch occupies residues methionine 1–arginine 22. Residues alanine 36 to isoleucine 68 form an interaction with GABRG2 region. An interaction with GPHN region spans residues alanine 36–leucine 117. Residues lysine 48–leucine 50 are interaction with LIR (LC3 nteracting Region) motif of ATG3. A lipid anchor (Phosphatidylethanolamine amidated glycine; alternate) is attached at glycine 116. The Phosphatidylserine amidated glycine; alternate moiety is linked to residue glycine 116. Leucine 117 is a propeptide (removed in mature form).

It belongs to the ATG8 family. Interacts with GPHN and NSF. Interacts with ATG3, ATG7 and ATG13. Interacts with alpha-tubulin. Interacts with beta-tubulin. Interacts with GABRG2. Interacts with RB1CC1. Interacts with ULK1. Interacts with CALR. Interacts with DDX47. Interacts with TP53INP1 and TP53INP2. Interacts with TBC1D5. Interacts with TBC1D25. Directly interacts with SQSTM1. Interacts with MAPK15. Interacts with TECPR2. Interacts with PCM1. Interacts with TRIM5 and TRIM21. Interacts with MEFV. Interacts with KIF21B. Interacts with WDFY3; this interaction is required for WDFY3 recruitment to MAP1LC3B-positive p62/SQSTM1 bodies. Interacts with FLCN; interaction regulates autophagy. Interacts with UBA5. Interacts with KBTBD6 and KBTBD7; the interaction is direct and required for the ubiquitination of TIAM1. Interacts with reticulophagy regulators RETREG1, RETREG2 and RETREG3. Interacts with IRGM. Interacts with STX17. Interacts with CT55; this interaction may be important for GABARAP protein stability. Interacts with DNM2. Interacts with NCOA4 (via C-terminus). In terms of processing, the precursor molecule is cleaved by ATG4 (ATG4A, ATG4B, ATG4C or ATG4D) to expose the glycine at the C-terminus and form the cytosolic form, GABARAP-I. The processed form is then activated by APG7L/ATG7, transferred to ATG3 and conjugated to phosphatidylethanolamine (PE) phospholipid to form the membrane-bound form, GABARAP-II. During non-canonical autophagy, the processed form is conjugated to phosphatidylserine (PS) phospholipid. ATG4 proteins also mediate the delipidation of PE-conjugated forms. In addition, ATG4B and ATG4D mediate delipidation of ATG8 proteins conjugated to PS during non-canonical autophagy. ATG4B constitutes the major protein for proteolytic activation. ATG4D is the main enzyme for delipidation activity. Expressed in brain (at protein level). Can be found in both somatodendritic and axonal compartment of neurons.

The protein resides in the cytoplasmic vesicle. The protein localises to the autophagosome membrane. It localises to the endomembrane system. Its subcellular location is the cytoplasm. It is found in the cytoskeleton. The protein resides in the golgi apparatus membrane. Its function is as follows. Ubiquitin-like modifier that plays a role in intracellular transport of GABA(A) receptors and its interaction with the cytoskeleton. Involved in autophagy: while LC3s are involved in elongation of the phagophore membrane, the GABARAP/GATE-16 subfamily is essential for a later stage in autophagosome maturation. Through its interaction with the reticulophagy receptor TEX264, participates in the remodeling of subdomains of the endoplasmic reticulum into autophagosomes upon nutrient stress, which then fuse with lysosomes for endoplasmic reticulum turnover. Also required for the local activation of the CUL3(KBTBD6/7) E3 ubiquitin ligase complex, regulating ubiquitination a nd degradation of TIAM1, a guanyl-nucleotide exchange factor (GEF) that activates RAC1 and downstream signal transduction. Thereby, regulates different biological processes including the organization of the cytoskeleton, cell migration and proliferation. Involved in apoptosis. This is Gamma-aminobutyric acid receptor-associated protein from Rattus norvegicus (Rat).